The primary structure comprises 476 residues: Phosphomethylpyrimidine synthase (476 aa).

The tract at residues 1-27 (MSTQLQHARDGTVTDAMRRVADREGRD) is disordered. Over residues 7–27 (HARDGTVTDAMRRVADREGRD) the composition is skewed to basic and acidic residues. Residues Asn67, Met96, Tyr125, His160, 180–182 (SRG), 221–224 (DGLR), and Glu260 contribute to the substrate site. His264 contributes to the Zn(2+) binding site. Tyr287 is a binding site for substrate. His328 is a binding site for Zn(2+). [4Fe-4S] cluster contacts are provided by Cys408, Cys411, and Cys416. Positions 425–476 (RDAGDDADDMTELTTETDLSESAAAEVNRPPTGTHDAPAAEQAPSPGDDDDD) are disordered. Positions 436–447 (ELTTETDLSESA) are enriched in low complexity.

Belongs to the ThiC family. [4Fe-4S] cluster is required as a cofactor.

It carries out the reaction 5-amino-1-(5-phospho-beta-D-ribosyl)imidazole + S-adenosyl-L-methionine = 4-amino-2-methyl-5-(phosphooxymethyl)pyrimidine + CO + 5'-deoxyadenosine + formate + L-methionine + 3 H(+). It participates in cofactor biosynthesis; thiamine diphosphate biosynthesis. Functionally, catalyzes the synthesis of the hydroxymethylpyrimidine phosphate (HMP-P) moiety of thiamine from aminoimidazole ribotide (AIR) in a radical S-adenosyl-L-methionine (SAM)-dependent reaction. The sequence is that of Phosphomethylpyrimidine synthase from Halobacterium salinarum (strain ATCC 29341 / DSM 671 / R1).